The following is a 96-amino-acid chain: Small ribosomal subunit protein bS6 (96 aa).

It belongs to the bacterial ribosomal protein bS6 family.

In terms of biological role, binds together with bS18 to 16S ribosomal RNA. This is Small ribosomal subunit protein bS6 from Mycobacteroides abscessus (strain ATCC 19977 / DSM 44196 / CCUG 20993 / CIP 104536 / JCM 13569 / NCTC 13031 / TMC 1543 / L948) (Mycobacterium abscessus).